Here is a 399-residue protein sequence, read N- to C-terminus: Galactokinase (399 aa).

Position 42–45 (E42–D45) interacts with substrate. ATP is bound by residues S76 and A133–S139. S139 and E171 together coordinate Mg(2+). D183 (proton acceptor) is an active-site residue. Y233 serves as a coordination point for substrate.

It belongs to the GHMP kinase family. GalK subfamily. Monomer.

Its subcellular location is the cytoplasm. The enzyme catalyses alpha-D-galactose + ATP = alpha-D-galactose 1-phosphate + ADP + H(+). The protein operates within carbohydrate metabolism; galactose metabolism. Catalyzes the transfer of the gamma-phosphate of ATP to D-galactose to form alpha-D-galactose-1-phosphate (Gal-1-P). In Lactococcus lactis subsp. lactis (strain IL1403) (Streptococcus lactis), this protein is Galactokinase.